A 344-amino-acid chain; its full sequence is Uroporphyrinogen decarboxylase (344 aa).

Substrate contacts are provided by residues 23 to 27 (RQAGR), aspartate 73, tyrosine 149, threonine 204, and histidine 321.

It belongs to the uroporphyrinogen decarboxylase family. Homodimer.

Its subcellular location is the cytoplasm. It catalyses the reaction uroporphyrinogen III + 4 H(+) = coproporphyrinogen III + 4 CO2. It participates in porphyrin-containing compound metabolism; protoporphyrin-IX biosynthesis; coproporphyrinogen-III from 5-aminolevulinate: step 4/4. Functionally, catalyzes the decarboxylation of four acetate groups of uroporphyrinogen-III to yield coproporphyrinogen-III. This chain is Uroporphyrinogen decarboxylase, found in Francisella tularensis subsp. holarctica (strain LVS).